Here is a 309-residue protein sequence, read N- to C-terminus: uncharacterized protein (309 aa).

Over residues 1–16 (MAGNSRRRGAVRKAGT) the composition is skewed to basic residues. Positions 1–70 (MAGNSRRRGA…AKRTEETETV (70 aa)) are disordered. Glycine 261, isoleucine 281, and leucine 290 together coordinate S-adenosyl-L-methionine.

The protein belongs to the class IV-like SAM-binding methyltransferase superfamily. RNA methyltransferase TrmH family.

This is an uncharacterized protein from Mycobacterium avium (strain 104).